Consider the following 380-residue polypeptide: Cytochrome b (380 aa).

The next 4 membrane-spanning stretches (helical) occupy residues 34–54 (FGSL…LLAT), 78–99 (WLIR…YLHI), 114–134 (WNTG…GYVL), and 179–199 (FFAL…IHLT). H84 and H98 together coordinate heme b. H183 and H197 together coordinate heme b. Position 202 (H202) interacts with a ubiquinone. 4 helical membrane-spanning segments follow: residues 227–247 (LKDI…ALFS), 289–309 (LGGV…PLLH), 321–341 (LSQF…WVGS), and 348–368 (FIII…LLFP).

The protein belongs to the cytochrome b family. As to quaternary structure, the cytochrome bc1 complex contains 11 subunits: 3 respiratory subunits (MT-CYB, CYC1 and UQCRFS1), 2 core proteins (UQCRC1 and UQCRC2) and 6 low-molecular weight proteins (UQCRH/QCR6, UQCRB/QCR7, UQCRQ/QCR8, UQCR10/QCR9, UQCR11/QCR10 and a cleavage product of UQCRFS1). This cytochrome bc1 complex then forms a dimer. Heme b serves as cofactor.

The protein localises to the mitochondrion inner membrane. Functionally, component of the ubiquinol-cytochrome c reductase complex (complex III or cytochrome b-c1 complex) that is part of the mitochondrial respiratory chain. The b-c1 complex mediates electron transfer from ubiquinol to cytochrome c. Contributes to the generation of a proton gradient across the mitochondrial membrane that is then used for ATP synthesis. This Pinguinus impennis (Great auk) protein is Cytochrome b (MT-CYB).